A 583-amino-acid chain; its full sequence is Moesin/ezrin/radixin homolog 1 (583 aa).

The FERM domain maps to 11-301; sequence MNVRVTTMDA…GNHELYMRRR (291 aa). 2 disordered regions span residues 466–518 and 539–558; these read TTTP…RTLA and RDDT…VRQG. Positions 476 to 485 are enriched in acidic residues; that stretch reads EEEEDNEEEL. Positions 496–518 are enriched in basic and acidic residues; the sequence is DYSKDFDTDEHIKDPVEERRTLA. At T564 the chain carries Phosphothreonine.

In terms of assembly, interacts with cytoskeletal actin.

It localises to the cell junction. The protein resides in the adherens junction. Its subcellular location is the cell projection. It is found in the microvillus. The protein localises to the rhabdomere. It localises to the cell membrane. The protein resides in the cytoplasm. Its subcellular location is the cytoskeleton. In terms of biological role, involved in connections of major cytoskeletal structures to the plasma membrane. The polypeptide is Moesin/ezrin/radixin homolog 1 (Aedes aegypti (Yellowfever mosquito)).